We begin with the raw amino-acid sequence, 212 residues long: ATP synthase F(0) complex subunit a (212 aa).

6 consecutive transmembrane segments (helical) span residues Met3–Ser23, Trp58–Leu78, Gln87–Leu107, Ile128–Val148, Phe169–Leu189, and Leu192–Leu212.

This sequence belongs to the ATPase A chain family. Component of the ATP synthase complex composed at least of ATP5F1A/subunit alpha, ATP5F1B/subunit beta, ATP5MC1/subunit c (homooctomer), MT-ATP6/subunit a, MT-ATP8/subunit 8, ATP5ME/subunit e, ATP5MF/subunit f, ATP5MG/subunit g, ATP5MK/subunit k, ATP5MJ/subunit j, ATP5F1C/subunit gamma, ATP5F1D/subunit delta, ATP5F1E/subunit epsilon, ATP5PF/subunit F6, ATP5PB/subunit b, ATP5PD/subunit d, ATP5PO/subunit OSCP. ATP synthase complex consists of a soluble F(1) head domain (subunits alpha(3) and beta(3)) - the catalytic core - and a membrane F(0) domain - the membrane proton channel (subunits c, a, 8, e, f, g, k and j). These two domains are linked by a central stalk (subunits gamma, delta, and epsilon) rotating inside the F1 region and a stationary peripheral stalk (subunits F6, b, d, and OSCP). Interacts with DNAJC30; interaction is direct.

The protein resides in the mitochondrion inner membrane. It catalyses the reaction H(+)(in) = H(+)(out). In terms of biological role, subunit a, of the mitochondrial membrane ATP synthase complex (F(1)F(0) ATP synthase or Complex V) that produces ATP from ADP in the presence of a proton gradient across the membrane which is generated by electron transport complexes of the respiratory chain. ATP synthase complex consist of a soluble F(1) head domain - the catalytic core - and a membrane F(1) domain - the membrane proton channel. These two domains are linked by a central stalk rotating inside the F(1) region and a stationary peripheral stalk. During catalysis, ATP synthesis in the catalytic domain of F(1) is coupled via a rotary mechanism of the central stalk subunits to proton translocation. With the subunit c (ATP5MC1), forms the proton-conducting channel in the F(0) domain, that contains two crucial half-channels (inlet and outlet) that facilitate proton movement from the mitochondrial intermembrane space (IMS) into the matrix. Protons are taken up via the inlet half-channel and released through the outlet half-channel, following a Grotthuss mechanism. This Tropidurus hispidus (Peters' lava lizard) protein is ATP synthase F(0) complex subunit a.